The sequence spans 489 residues: Coronin-1B (489 aa).

Ser-2 is subject to Phosphoserine; by PKC. WD repeat units follow at residues 18–72 (QPVK…GRID), 73–122 (KAYP…SPLT), 123–166 (EPVV…GTAE), 167–210 (ELYR…RGTL), 211–256 (VAER…ENLE), and 257–296 (EPMA…RYFE). The segment at 408-444 (RRNVLSDSRPAMAPGSSHLGAPASTTTAADATPSGSL) is disordered. Low complexity predominate over residues 428-441 (APASTTTAADATPS). Positions 449–474 (EAGKLEEVMQELRALRALVKEQGDRI) form a coiled coil.

The protein belongs to the WD repeat coronin family. As to quaternary structure, forms homooligomers, but does not form complexes with the other coronins. Interacts with Arp2/3 complex components, including ACTR2, ARPC1B and ARPC2. Binds actin. Post-translationally, phosphorylation by PKC on Ser-2 regulates the interaction with the Arp2/3 complex and cell motility in fibroblasts. Phosphorylation does not seem to affect subcellular location.

The protein localises to the cytoplasm. It localises to the cytoskeleton. It is found in the stress fiber. Functionally, regulates leading edge dynamics and cell motility in fibroblasts. May be involved in cytokinesis and signal transduction. The chain is Coronin-1B (CORO1B) from Homo sapiens (Human).